The following is a 141-amino-acid chain: Nucleoside diphosphate kinase (141 aa).

The ATP site is built by Lys-11, Phe-59, Arg-87, Thr-93, Arg-104, and Asn-114. The Pros-phosphohistidine intermediate role is filled by His-117.

The protein belongs to the NDK family. Homotetramer. Mg(2+) is required as a cofactor.

Its subcellular location is the cytoplasm. It carries out the reaction a 2'-deoxyribonucleoside 5'-diphosphate + ATP = a 2'-deoxyribonucleoside 5'-triphosphate + ADP. The catalysed reaction is a ribonucleoside 5'-diphosphate + ATP = a ribonucleoside 5'-triphosphate + ADP. In terms of biological role, major role in the synthesis of nucleoside triphosphates other than ATP. The ATP gamma phosphate is transferred to the NDP beta phosphate via a ping-pong mechanism, using a phosphorylated active-site intermediate. The chain is Nucleoside diphosphate kinase from Delftia acidovorans (strain DSM 14801 / SPH-1).